The primary structure comprises 912 residues: Protein translocase subunit SecA (912 aa).

Residues Gln-87, 105–109 (GEGKT), and Asp-499 each bind ATP. Zn(2+)-binding residues include Cys-897, Cys-899, Cys-908, and His-909.

Belongs to the SecA family. Monomer and homodimer. Part of the essential Sec protein translocation apparatus which comprises SecA, SecYEG and auxiliary proteins SecDF-YajC and YidC. The cofactor is Zn(2+).

It localises to the cell inner membrane. Its subcellular location is the cytoplasm. It catalyses the reaction ATP + H2O + cellular proteinSide 1 = ADP + phosphate + cellular proteinSide 2.. Its function is as follows. Part of the Sec protein translocase complex. Interacts with the SecYEG preprotein conducting channel. Has a central role in coupling the hydrolysis of ATP to the transfer of proteins into and across the cell membrane, serving both as a receptor for the preprotein-SecB complex and as an ATP-driven molecular motor driving the stepwise translocation of polypeptide chains across the membrane. The chain is Protein translocase subunit SecA from Rhizorhabdus wittichii (strain DSM 6014 / CCUG 31198 / JCM 15750 / NBRC 105917 / EY 4224 / RW1) (Sphingomonas wittichii).